The sequence spans 389 residues: Formate-dependent phosphoribosylglycinamide formyltransferase (389 aa).

Residues 12-13 and Glu72 each bind N(1)-(5-phospho-beta-D-ribosyl)glycinamide; that span reads EL. Residues Arg104, Lys145, 150–155, 185–188, and Glu193 each bind ATP; these read SSGKGQ and EEFI. An ATP-grasp domain is found at 109–301; the sequence is DLAAKELGLK…EFELHLRAVL (193 aa). Glu258 and Glu271 together coordinate Mg(2+). N(1)-(5-phospho-beta-D-ribosyl)glycinamide-binding positions include Asp278, Lys350, and 357-358; that span reads RR.

It belongs to the PurK/PurT family. As to quaternary structure, homodimer.

It carries out the reaction N(1)-(5-phospho-beta-D-ribosyl)glycinamide + formate + ATP = N(2)-formyl-N(1)-(5-phospho-beta-D-ribosyl)glycinamide + ADP + phosphate + H(+). Its pathway is purine metabolism; IMP biosynthesis via de novo pathway; N(2)-formyl-N(1)-(5-phospho-D-ribosyl)glycinamide from N(1)-(5-phospho-D-ribosyl)glycinamide (formate route): step 1/1. Involved in the de novo purine biosynthesis. Catalyzes the transfer of formate to 5-phospho-ribosyl-glycinamide (GAR), producing 5-phospho-ribosyl-N-formylglycinamide (FGAR). Formate is provided by PurU via hydrolysis of 10-formyl-tetrahydrofolate. In Phocaeicola vulgatus (strain ATCC 8482 / DSM 1447 / JCM 5826 / CCUG 4940 / NBRC 14291 / NCTC 11154) (Bacteroides vulgatus), this protein is Formate-dependent phosphoribosylglycinamide formyltransferase.